A 364-amino-acid polypeptide reads, in one-letter code: Acidic fibroblast growth factor intracellular-binding protein (364 aa).

T2 is subject to N-acetylthreonine.

Binds to internalized FGF1; this interaction is increased in the presence of CSNKB, suggesting a possible cooperative interaction between CSNKB and FIBP in binding to FGF1. Highly expressed in heart, skeletal muscle and pancreas. Expressed at lower levels in brain. Also found in placenta, liver and kidney.

It localises to the nucleus. It is found in the endomembrane system. In terms of biological role, may be involved in mitogenic function of FGF1. May mediate with IER2 FGF-signaling in the establishment of laterality in the embryo. This is Acidic fibroblast growth factor intracellular-binding protein (FIBP) from Homo sapiens (Human).